The chain runs to 1108 residues: Receptor-type guanylate cyclase gcy-20 (1108 aa).

An N-terminal signal peptide occupies residues 1-15 (MRILLLLLQNILVFC). Topologically, residues 16-474 (QFLQTIKVGL…ECPADFVKEY (459 aa)) are extracellular. 6 N-linked (GlcNAc...) asparagine glycosylation sites follow: N66, N131, N319, N341, N366, and N380. Residues 475–495 (LVYTIIAAFIVILALLAGCAG) form a helical membrane-spanning segment. In terms of domain architecture, Protein kinase spans 483–803 (FIVILALLAG…IEQVRSHLNG (321 aa)). ATP is bound by residues 489–497 (LLAGCAGLL) and K571. Residues 496 to 1108 (LLYTMHMKRK…QAGDNNSETV (613 aa)) are Cytoplasmic-facing. In terms of domain architecture, Guanylate cyclase spans 876-1006 (TIFFSDVVQF…DAVNTASRME (131 aa)). The tract at residues 1083–1108 (LEKNAEGSETSSLSVDQAGDNNSETV) is disordered. Polar residues predominate over residues 1089–1108 (GSETSSLSVDQAGDNNSETV).

The protein belongs to the adenylyl cyclase class-4/guanylyl cyclase family. As to expression, expressed asymmetrically in ASE left (ASEL) sensory neuron. Expressed in excretory gland and canal cell.

The protein resides in the cell membrane. It carries out the reaction GTP = 3',5'-cyclic GMP + diphosphate. Guanylate cyclase involved in the production of the second messenger cGMP. This chain is Receptor-type guanylate cyclase gcy-20, found in Caenorhabditis elegans.